The chain runs to 263 residues: MFRNQYDNDVTVWSPQGRIHQIEYAMEAVKQGSATVGLKSKTHAVLVALKRAQSELAAHQKKILHVDNHIGISIAGLTADARLLCNFMRQECLDSRFVFDRPLPVSRLVSLIGSKTQIPTQRYGRRPYGVGLLIAGYDDMGPHIFQTCPSANYFDCRAMSIGARSQSARTYLERHMSEFMECNLNELVKHGLRALRETLPAEQDLTTKNVSIGIVGKDLEFTIYDDDDVSPFLEGLEERPQRKAQPAQPADEPAEKADEPMEH.

Met1 is subject to N-acetylmethionine. Ser110 carries the post-translational modification Phosphoserine; alternate. Residue Ser110 is glycosylated (O-linked (GlcNAc) serine; alternate). A Glycyl lysine isopeptide (Lys-Gly) (interchain with G-Cter in ubiquitin) cross-link involves residue Lys115. Position 177 is a phosphoserine (Ser177). Residue Lys208 forms a Glycyl lysine isopeptide (Lys-Gly) (interchain with G-Cter in ubiquitin) linkage. Positions 232-263 (FLEGLEERPQRKAQPAQPADEPAEKADEPMEH) are disordered. Basic and acidic residues predominate over residues 253–263 (PAEKADEPMEH).

This sequence belongs to the peptidase T1A family. In terms of assembly, the 26S proteasome consists of a 20S proteasome core and two 19S regulatory subunits. The 20S proteasome core is a barrel-shaped complex made of 28 subunits that are arranged in four stacked rings. The two outer rings are each formed by seven alpha subunits, and the two inner rings are formed by seven beta subunits. The proteolytic activity is exerted by three beta-subunits PSMB5, PSMB6 and PSMB7. Interacts with NOTCH3. Interacts with ZFAND1.

It is found in the cytoplasm. The protein localises to the nucleus. Its function is as follows. Component of the 20S core proteasome complex involved in the proteolytic degradation of most intracellular proteins. This complex plays numerous essential roles within the cell by associating with different regulatory particles. Associated with two 19S regulatory particles, forms the 26S proteasome and thus participates in the ATP-dependent degradation of ubiquitinated proteins. The 26S proteasome plays a key role in the maintenance of protein homeostasis by removing misfolded or damaged proteins that could impair cellular functions, and by removing proteins whose functions are no longer required. Associated with the PA200 or PA28, the 20S proteasome mediates ubiquitin-independent protein degradation. This type of proteolysis is required in several pathways including spermatogenesis (20S-PA200 complex) or generation of a subset of MHC class I-presented antigenic peptides (20S-PA28 complex). The sequence is that of Proteasome subunit alpha type-1 from Homo sapiens (Human).